The primary structure comprises 342 residues: Flavanone 3-dioxygenase 2 (342 aa).

In terms of domain architecture, Fe2OG dioxygenase spans 193–293 (QEQHMAVNYY…RMSVASFLCP (101 aa)). Fe cation-binding residues include His217, Asp219, and His274. Arg284 contacts 2-oxoglutarate.

It belongs to the iron/ascorbate-dependent oxidoreductase family. Requires Fe(2+) as cofactor. L-ascorbate serves as cofactor. In terms of tissue distribution, expressed in roots, leaves and stems. Expressed at low levels in seeds.

The catalysed reaction is a (2S)-flavan-4-one + 2-oxoglutarate + O2 = a (2R,3R)-dihydroflavonol + succinate + CO2. The protein operates within secondary metabolite biosynthesis; flavonoid biosynthesis. Catalyzes the 3-beta-hydroxylation of 2S-flavanones to 2R,3R-dihydroflavonols which are intermediates in the biosynthesis of flavonols, anthocyanidins, catechins and proanthocyanidins in plants. Converts (2S)-eriodictyol to (+)-taxifolin and (2S)-naringenin to (+)-(2R/3R)-dihydrokaempferol in vitro. This chain is Flavanone 3-dioxygenase 2, found in Oryza sativa subsp. japonica (Rice).